We begin with the raw amino-acid sequence, 304 residues long: Dermonecrotic toxin LlSicTox-betaIA1 (304 aa).

An N-terminal signal peptide occupies residues 1-21 (MLLSAVISFIGFAAFLQEANG). The propeptide occupies 22–26 (HVVER). His38 is a catalytic residue. Residues Glu58 and Asp60 each contribute to the Mg(2+) site. The active-site Nucleophile is the His74. 2 disulfides stabilise this stretch: Cys78/Cys84 and Cys80/Cys223. Asp118 lines the Mg(2+) pocket.

It belongs to the arthropod phospholipase D family. Class II subfamily. Class IIb sub-subfamily. It depends on Mg(2+) as a cofactor. Expressed by the venom gland.

It is found in the secreted. The catalysed reaction is an N-(acyl)-sphingosylphosphocholine = an N-(acyl)-sphingosyl-1,3-cyclic phosphate + choline. The enzyme catalyses an N-(acyl)-sphingosylphosphoethanolamine = an N-(acyl)-sphingosyl-1,3-cyclic phosphate + ethanolamine. It carries out the reaction a 1-acyl-sn-glycero-3-phosphocholine = a 1-acyl-sn-glycero-2,3-cyclic phosphate + choline. It catalyses the reaction a 1-acyl-sn-glycero-3-phosphoethanolamine = a 1-acyl-sn-glycero-2,3-cyclic phosphate + ethanolamine. Its function is as follows. Dermonecrotic toxins cleave the phosphodiester linkage between the phosphate and headgroup of certain phospholipids (sphingolipid and lysolipid substrates), forming an alcohol (often choline) and a cyclic phosphate. This toxin acts on sphingomyelin (SM) with low activity. It may also act on ceramide phosphoethanolamine (CPE), lysophosphatidylcholine (LPC) and lysophosphatidylethanolamine (LPE), but not on lysophosphatidylserine (LPS), and lysophosphatidylglycerol (LPG). It acts by transphosphatidylation, releasing exclusively cyclic phosphate products as second products. Induces hemolysis, dermonecrosis, and edema. Also induces platelet aggregation. In Loxosceles laeta (South American recluse spider), this protein is Dermonecrotic toxin LlSicTox-betaIA1.